Reading from the N-terminus, the 102-residue chain is Cell division topological specificity factor (102 aa).

This sequence belongs to the MinE family.

Functionally, prevents the cell division inhibition by proteins MinC and MinD at internal division sites while permitting inhibition at polar sites. This ensures cell division at the proper site by restricting the formation of a division septum at the midpoint of the long axis of the cell. The polypeptide is Cell division topological specificity factor (Synechococcus sp. (strain CC9605)).